Reading from the N-terminus, the 400-residue chain is Bifunctional arginine demethylase and lysyl-hydroxylase psr-1 (400 aa).

The JmjC domain occupies 146 to 310 (RKTKKLSEDY…LVWPKTVKGR (165 aa)). T189 is a binding site for substrate. The Fe cation site is built by H192 and D194. N202 contributes to the 2-oxoglutarate binding site. Residue K209 coordinates substrate. H278 is a Fe cation binding site. 2-oxoglutarate is bound at residue T290. The tract at residues 342–400 (DMNESSSDSSSSSSSSDDSSDESDCDDSGRCGGRKRKNDDRSNECPEKMSTTYFQNSLV) is disordered. Positions 346–358 (SSSDSSSSSSSSD) are enriched in low complexity. The segment covering 378–388 (KNDDRSNECPE) has biased composition (basic and acidic residues). The segment covering 390–400 (MSTTYFQNSLV) has biased composition (polar residues).

It belongs to the JMJD6 family. Interacts with ced-5 and ced-12. Fe(2+) serves as cofactor.

It is found in the nucleus. In terms of biological role, dioxygenase that can both act as a histone arginine demethylase and a lysyl-hydroxylase. This Caenorhabditis elegans protein is Bifunctional arginine demethylase and lysyl-hydroxylase psr-1 (psr-1).